The chain runs to 175 residues: ATP synthase subunit b, chloroplastic (175 aa).

The chain crosses the membrane as a helical span at residues 26–44; it reads VINLAVVIGVVVSFVGDAV.

It belongs to the ATPase B chain family. F-type ATPases have 2 components, F(1) - the catalytic core - and F(0) - the membrane proton channel. F(1) has five subunits: alpha(3), beta(3), gamma(1), delta(1), epsilon(1). F(0) has four main subunits: a(1), b(1), b'(1) and c(10-14). The alpha and beta chains form an alternating ring which encloses part of the gamma chain. F(1) is attached to F(0) by a central stalk formed by the gamma and epsilon chains, while a peripheral stalk is formed by the delta, b and b' chains.

The protein resides in the plastid. It localises to the chloroplast thylakoid membrane. In terms of biological role, f(1)F(0) ATP synthase produces ATP from ADP in the presence of a proton or sodium gradient. F-type ATPases consist of two structural domains, F(1) containing the extramembraneous catalytic core and F(0) containing the membrane proton channel, linked together by a central stalk and a peripheral stalk. During catalysis, ATP synthesis in the catalytic domain of F(1) is coupled via a rotary mechanism of the central stalk subunits to proton translocation. Component of the F(0) channel, it forms part of the peripheral stalk, linking F(1) to F(0). The protein is ATP synthase subunit b, chloroplastic of Tupiella akineta (Green alga).